Here is a 231-residue protein sequence, read N- to C-terminus: Probable transglycosylase SceD (231 aa).

Residues 1-27 form the signal peptide; that stretch reads MKKTLLASSLAVGLGIVAGNAGHEAQA. Residues 92–153 are disordered; it reads MSAQAPATNN…ESKASEGSSV (62 aa). Residues 96 to 116 are compositionally biased toward polar residues; it reads APATNNVAPSADQSNQVQSQE. Over residues 119 to 137 the composition is skewed to low complexity; the sequence is APQNAQTQQPQASTSNNSQ. The segment covering 138–153 has biased composition (polar residues); the sequence is VTATPTESKASEGSSV.

Belongs to the transglycosylase family. SceD subfamily.

The protein resides in the secreted. In terms of biological role, is able to cleave peptidoglycan and affects clumping and separation of bacterial cells. The chain is Probable transglycosylase SceD (sceD) from Staphylococcus aureus (strain MRSA252).